Here is a 426-residue protein sequence, read N- to C-terminus: Actin-like protein 6B (426 aa).

Positions 39 to 82 (TTVGLLAAEEGGGLELEGDKEKKGKIFHIDTNALHVPRDGAEVM) are essential for mediating its function in dendritic development; may contribute to neuronal-specific targeting.

The protein belongs to the actin family. As to quaternary structure, component of the multiprotein chromatin-remodeling complexes SWI/SNF: SWI/SNF-A (BAF), SWI/SNF-B (PBAF) and related complexes. The canonical complex contains a catalytic subunit (either SMARCA4/BRG1/BAF190A or SMARCA2/BRM/BAF190B) and at least SMARCE1, ACTL6A/BAF53, SMARCC1/BAF155, SMARCC2/BAF170 and SMARCB1/SNF5/BAF47. Other subunits specific to each of the complexes may also be present permitting several possible combinations developmentally and tissue specific. Component of the BAF complex, which includes at least actin (ACTB), ARID1A/BAF250A, ARID1B/BAF250B, SMARCA2/BRM, SMARCA4/BRG1/BAF190A, ACTL6A/BAF53, ACTL6B/BAF53B, SMARCE1/BAF57, SMARCC1/BAF155, SMARCC2/BAF170, SMARCB1/SNF5/INI1 and one or more SMARCD1/BAF60A, SMARCD2/BAF60B, or SMARCD3/BAF60C. Component of neuron-specific chromatin remodeling complex (nBAF complex) composed of at least, ARID1A/BAF250A or ARID1B/BAF250B, SMARCD1/BAF60A or SMARCD2/BAF60B or SMARCD3/BAF60C, SMARCA2/BRM/BAF190B, SMARCA4/BRG1/BAF190A, SMARCB1/BAF47, SMARCC1/BAF155, SMARCE1/BAF57, SMARCC2/BAF170, DPF1/BAF45B, DPF3/BAF45C, ACTL6B/BAF53B and actin (ACTB). Note that the nBAF complex is polymorphic in regard to the ATPase, SMARCA2 and SMARCA4 occupying mutually exclusive positions. May be a component of the SWI/SNF-B (PBAF) chromatin remodeling complex, at least composed of SMARCA4/BRG1, SMARCB1/BAF47/SNF5, ACTL6A/BAF53A or ACTL6B/BAF53B, SMARCE1/BAF57, SMARCD1/BAF60A, SMARCD2/BAF60B, perhaps SMARCD3/BAF60C, SMARCC1/BAF155, SMARCC2/BAF170, PBRM1/BAF180, ARID2/BAF200 and actin.

The protein resides in the nucleus. In terms of biological role, involved in transcriptional activation and repression of select genes by chromatin remodeling (alteration of DNA-nucleosome topology). Component of SWI/SNF chromatin remodeling complexes that carry out key enzymatic activities, changing chromatin structure by altering DNA-histone contacts within a nucleosome in an ATP-dependent manner. Belongs to the neuron-specific chromatin remodeling complex (nBAF complex), as such plays a role in remodeling mononucleosomes in an ATP-dependent fashion, and is required for postmitotic neural development and dendritic outgrowth. During neural development a switch from a stem/progenitor to a postmitotic chromatin remodeling mechanism occurs as neurons exit the cell cycle and become committed to their adult state. The transition from proliferating neural stem/progenitor cells to postmitotic neurons requires a switch in subunit composition of the npBAF and nBAF complexes. As neural progenitors exit mitosis and differentiate into neurons, npBAF complexes which contain ACTL6A/BAF53A and PHF10/BAF45A, are exchanged for homologous alternative ACTL6B/BAF53B and DPF1/BAF45B or DPF3/BAF45C subunits in neuron-specific complexes (nBAF). The npBAF complex is essential for the self-renewal/proliferative capacity of the multipotent neural stem cells. The nBAF complex along with CREST plays a role regulating the activity of genes essential for dendrite growth. ACTL6B/BAF53B is not essential for assembly of the nBAF complex but is required for targeting the complex and CREST to the promoter of genes essential for dendritic growth. Essential for neuronal maturation and dendrite development. This Homo sapiens (Human) protein is Actin-like protein 6B.